The following is a 158-amino-acid chain: Ecotin (158 aa).

Positions 1–21 (MRLLPLASVTLLSVLCAQAFA) are cleaved as a signal peptide. An intrachain disulfide couples Cys67 to Cys104.

Belongs to the protease inhibitor I11 (ecotin) family. Homodimer.

It localises to the periplasm. In terms of biological role, general inhibitor of family S1 serine proteases. This chain is Ecotin, found in Pseudomonas fluorescens (strain ATCC BAA-477 / NRRL B-23932 / Pf-5).